Consider the following 73-residue polypeptide: Putative membrane protein insertion efficiency factor (73 aa).

The protein belongs to the UPF0161 family.

The protein resides in the cell inner membrane. Its function is as follows. Could be involved in insertion of integral membrane proteins into the membrane. In Rickettsia bellii (strain RML369-C), this protein is Putative membrane protein insertion efficiency factor.